A 534-amino-acid polypeptide reads, in one-letter code: Ulvan lyase NLR42 (534 aa).

The N-terminal stretch at 1 to 47 (MVFFKDLFIFKSLIKGSLYSGHMKKKLLNYLPLFALMLFTVSMMAQT) is a signal peptide. A disulfide bond links Cys59 and Cys89. Gly63, Asn68, Asp86, Thr88, Ala91, and Asp92 together coordinate Ca(2+). Tyr164 contacts substrate. Lys169 serves as the catalytic Proton acceptor. Residues 218-223 (SGAAGR) and 288-291 (YRVK) contribute to the substrate site. Tyr288 serves as the catalytic Proton donor/acceptor. The interval 316–449 (PAADIYRIKN…SKWNLESTTL (134 aa)) is ulvan-binding domain. Residues 450-534 (SVDSQQIASV…KVYQTKLIVN (85 aa)) constitute a propeptide, removed by the type IX secretion system (T9SS).

This sequence belongs to the polysaccharide lyase 28 family. The cofactor is Ca(2+).

It localises to the secreted. In terms of biological role, ulvan lyase involved in ulvan degradation. Ulvan is the main polysaccharide component of the Ulvales (green seaweed) cell wall. It is composed of disaccharide building blocks comprising 3-sulfated rhamnose (Rha3S) linked to D-glucuronic acid (GlcA), L-iduronic acid (IduA), or D-xylose (Xyl). Ulvan lyase catalyzes the endolytic cleavage of the glycosidic bond between Rha3S and the uronic acids GlcA or IduA, producing oligosaccharides that have unsaturated 4-deoxy-L-threo-hex-4-enopyranosiduronic acid (deltaUA) at the non-reducing end. This results eventually in the degradation of the ulvan polysaccharide into deltaUA-Rha3S disaccharides and deltaUA-Rha3S-Xyl-Rha3S tetrasaccharides. The polypeptide is Ulvan lyase NLR42 (Nonlabens ulvanivorans (Persicivirga ulvanivorans)).